Consider the following 525-residue polypeptide: GMP synthase [glutamine-hydrolyzing] (525 aa).

The 199-residue stretch at 9–207 folds into the Glutamine amidotransferase type-1 domain; that stretch reads RILILDFGSQ…VRDICQCEAL (199 aa). The Nucleophile role is filled by Cys86. Active-site residues include His181 and Glu183. In terms of domain architecture, GMPS ATP-PPase spans 208–400; sequence WTPAKIIDDA…LGLPYDMLYR (193 aa). Position 235–241 (235–241) interacts with ATP; it reads SGGVDSS.

In terms of assembly, homodimer.

The enzyme catalyses XMP + L-glutamine + ATP + H2O = GMP + L-glutamate + AMP + diphosphate + 2 H(+). It functions in the pathway purine metabolism; GMP biosynthesis; GMP from XMP (L-Gln route): step 1/1. In terms of biological role, catalyzes the synthesis of GMP from XMP. This chain is GMP synthase [glutamine-hydrolyzing], found in Shigella boydii serotype 18 (strain CDC 3083-94 / BS512).